The sequence spans 763 residues: Xaa-Pro dipeptidyl-peptidase (763 aa).

Catalysis depends on charge relay system residues Ser349, Asp469, and His499.

It belongs to the peptidase S15 family. In terms of assembly, homodimer.

It is found in the cytoplasm. The enzyme catalyses Hydrolyzes Xaa-Pro-|- bonds to release unblocked, N-terminal dipeptides from substrates including Ala-Pro-|-p-nitroanilide and (sequentially) Tyr-Pro-|-Phe-Pro-|-Gly-Pro-|-Ile.. In terms of biological role, removes N-terminal dipeptides sequentially from polypeptides having unsubstituted N-termini provided that the penultimate residue is proline. The polypeptide is Xaa-Pro dipeptidyl-peptidase (Streptococcus macedonicus (Streptococcus gallolyticus macedonicus)).